The following is a 201-amino-acid chain: U1 small nuclear ribonucleoprotein C (201 aa).

The segment at 4–36 (YYCEYCDIYLTHSSPVGRRQHNQGRKHISAKIE) adopts a Matrin-type zinc-finger fold. Positions 137-154 (IQKPYNNFDNKNNNYNNK) are enriched in low complexity. The interval 137-176 (IQKPYNNFDNKNNNYNNKPITNSSYKNDKQDYRNNNENND) is disordered.

This sequence belongs to the U1 small nuclear ribonucleoprotein C family. U1 snRNP is composed of the 7 core Sm proteins B/B', D1, D2, D3, E, F and G that assemble in a heptameric protein ring on the Sm site of the small nuclear RNA to form the core snRNP, and at least 3 U1 snRNP-specific proteins U1-70K, U1-A and U1-C. U1-C interacts with U1 snRNA and the 5' splice-site region of the pre-mRNA.

It localises to the nucleus. Component of the spliceosomal U1 snRNP, which is essential for recognition of the pre-mRNA 5' splice-site and the subsequent assembly of the spliceosome. U1-C is directly involved in initial 5' splice-site recognition for both constitutive and regulated alternative splicing. The interaction with the 5' splice-site seems to precede base-pairing between the pre-mRNA and the U1 snRNA. Stimulates commitment or early (E) complex formation by stabilizing the base pairing of the 5' end of the U1 snRNA and the 5' splice-site region. The chain is U1 small nuclear ribonucleoprotein C from Plasmodium yoelii yoelii.